The chain runs to 345 residues: Phosphoribosylformylglycinamidine cyclo-ligase (345 aa).

Belongs to the AIR synthase family.

The protein localises to the cytoplasm. It carries out the reaction 2-formamido-N(1)-(5-O-phospho-beta-D-ribosyl)acetamidine + ATP = 5-amino-1-(5-phospho-beta-D-ribosyl)imidazole + ADP + phosphate + H(+). It functions in the pathway purine metabolism; IMP biosynthesis via de novo pathway; 5-amino-1-(5-phospho-D-ribosyl)imidazole from N(2)-formyl-N(1)-(5-phospho-D-ribosyl)glycinamide: step 2/2. The protein is Phosphoribosylformylglycinamidine cyclo-ligase of Staphylococcus carnosus (strain TM300).